The sequence spans 621 residues: Threonine--tRNA ligase (621 aa).

The interval 1 to 137 is editing domain; sequence MRILQLHCDS…ESSKVVTKDS (137 aa). The disordered stretch occupies residues 128–150; the sequence is ESSKVVTKDSTTKDDDEDTSDAL. A catalytic region spans residues 202–501; it reads PHVALMKKLA…SKKGKKPQLP (300 aa). Residues cysteine 294, histidine 346, and histidine 470 each coordinate Zn(2+). The span at 598–612 shows a compositional bias: polar residues; the sequence is QTSGKPYTGLNQSQH. A disordered region spans residues 598 to 621; it reads QTSGKPYTGLNQSQHLSKRPQLMV.

The protein belongs to the class-II aminoacyl-tRNA synthetase family. As to quaternary structure, homodimer. The cofactor is Zn(2+).

It localises to the cytoplasm. It catalyses the reaction tRNA(Thr) + L-threonine + ATP = L-threonyl-tRNA(Thr) + AMP + diphosphate + H(+). Its function is as follows. Catalyzes the attachment of threonine to tRNA(Thr) in a two-step reaction: L-threonine is first activated by ATP to form Thr-AMP and then transferred to the acceptor end of tRNA(Thr). Also edits incorrectly charged L-seryl-tRNA(Thr). The polypeptide is Threonine--tRNA ligase (Nitrosopumilus maritimus (strain SCM1)).